Here is a 502-residue protein sequence, read N- to C-terminus: ATP synthase subunit alpha (502 aa).

An ATP-binding site is contributed by 170-177 (GDRKTGKT).

This sequence belongs to the ATPase alpha/beta chains family. F-type ATPases have 2 components, CF(1) - the catalytic core - and CF(0) - the membrane proton channel. CF(1) has five subunits: alpha(3), beta(3), gamma(1), delta(1), epsilon(1). CF(0) has four main subunits: a, b, b' and c.

It localises to the cellular thylakoid membrane. It carries out the reaction ATP + H2O + 4 H(+)(in) = ADP + phosphate + 5 H(+)(out). Its function is as follows. Produces ATP from ADP in the presence of a proton gradient across the membrane. The alpha chain is a regulatory subunit. The protein is ATP synthase subunit alpha of Microcystis aeruginosa (strain NIES-843 / IAM M-2473).